A 544-amino-acid polypeptide reads, in one-letter code: Neurofilament light polypeptide (544 aa).

At S2 the chain carries N-acetylserine. The segment at 2–87 (SSYSYDPYYT…KIVRTQEKVQ (86 aa)) is head. Residues 84–394 (EKVQLQDLND…KLLEGEETRL (311 aa)) enclose the IF rod domain. A coil 1A region spans residues 88–119 (LQDLNDRFANFIERVHELEQRNKVLEAELLLL). Residues 120–132 (RQKHNEPSRLRDM) form a linker 1 region. A coil 1B region spans residues 133–228 (YEKEVRDVRL…KVHEEELSQL (96 aa)). Residues 229–246 (QSQVQYAQVSLEVEVAKP) form a linker 12 region. The tract at residues 247–265 (DLSSALRDIRGQYEKLAAK) is coil 2A. Positions 266–274 (NMQSAEEWF) are linker 2. A coil 2B region spans residues 275–390 (KSRFTVLTQS…AAYRKLLEGE (116 aa)). Residues 391–435 (ETRLSFSGVGAITSGYTQSAPVFGRSAYSLQSSSYMTSRAFPTYY) form a tail, subdomain A region. Residues 391 to 544 (ETRLSFSGVG…EESEKKEKKK (154 aa)) are tail. The segment at 436-544 (SSHVQEEQLD…EESEKKEKKK (109 aa)) is tail, subdomain B (acidic). The tract at residues 450–544 (IESSRAEEAK…EESEKKEKKK (95 aa)) is disordered. Basic and acidic residues predominate over residues 451–462 (ESSRAEEAKAEA). Residues 463–525 (PEEEEEEAAE…EAEGDGEEEG (63 aa)) are compositionally biased toward acidic residues. Residues 526–544 (ESKGDEAAEEESEKKEKKK) are compositionally biased toward basic and acidic residues.

The protein belongs to the intermediate filament family. In terms of assembly, forms homodimers (in vitro).

The protein resides in the cell projection. Its subcellular location is the axon. The protein localises to the cytoplasm. It localises to the cytoskeleton. Its function is as follows. Neurofilaments usually contain three intermediate filament proteins: NEFL, NEFM, and NEFH which are involved in the maintenance of neuronal caliber. May additionally cooperate with other neuronal intermediate filament proteins to form neuronal filamentous networks. The protein is Neurofilament light polypeptide (nefl) of Xenopus laevis (African clawed frog).